A 553-amino-acid polypeptide reads, in one-letter code: Arginine--tRNA ligase (553 aa).

A 'HIGH' region motif is present at residues 130–140 (ANPTGDLHIGH).

The protein belongs to the class-I aminoacyl-tRNA synthetase family. As to quaternary structure, monomer.

It is found in the cytoplasm. It carries out the reaction tRNA(Arg) + L-arginine + ATP = L-arginyl-tRNA(Arg) + AMP + diphosphate. The chain is Arginine--tRNA ligase from Staphylococcus epidermidis (strain ATCC 35984 / DSM 28319 / BCRC 17069 / CCUG 31568 / BM 3577 / RP62A).